The following is a 538-amino-acid chain: Prickle planar cell polarity protein 3-A (538 aa).

One can recognise a PET domain in the interval 66 to 175 (SGSQRDSLCE…CVRPVSGTMS (110 aa)). LIM zinc-binding domains follow at residues 177–241 (TVCQ…ELKR), 242–302 (PRCL…LYAQ), and 305–366 (DSCG…NATP). Positions 369–378 (SFSPSQTDLS) are enriched in polar residues. Disordered stretches follow at residues 369 to 398 (SFSP…DGDS), 433 to 463 (RGAP…TRVT), and 475 to 538 (SVSL…CLLS). Over residues 435 to 449 (APKEFSRECPNRRSL) the composition is skewed to basic and acidic residues. The span at 451 to 463 (DLNSHTRTPTRVT) shows a compositional bias: polar residues. Composition is skewed to low complexity over residues 475–488 (SVSL…SSSS) and 514–523 (APPTHAPTST).

It belongs to the prickle / espinas / testin family. As to quaternary structure, interacts with vangl2 via its C-terminus. The vangl2-dependent membrane recruitment of prickle3 is a prerequisite for its polarization. Interacts with wtip. Wtip is involved in the recruitment of prickle3 to the basal body. Predominantly expressed in the epidermal ectoderm.

It localises to the cytoplasm. The protein resides in the cell membrane. It is found in the mitochondrion. Involved in the planar cell polarity (PCP) pathway that is essential for the polarization of epithelial cells during morphogenetic processes, including gastrulation and neurulation. PCP is maintained by two molecular modules, the global and the core modules. Proteins of the core module include the proteins Frizzled (Fz), Disheveled (Dsh), Van Gogh (Vang), Prickle (Pk), Flamingo (Fmi, Celsr) and Diego (Dgo). The core module proteins develop subcellular asymmetry, accumulating in two groups on opposite sides of epithelial cells. Distinct proximal (Vang, Pk and Fmi) and distal (Fz, Dsh, Dgo and Fmi) complexes segregate to opposite sides of the cell, where they interact with the opposite complex in the neighboring cell at or near the adherents junctions. Directional information to orient polarization with respect to the tissue axes is provided by the global module which involves Wnt proteins. Involved in the organization of the basal body. Involved in cilia growth and positioning. Required for proper assembly, stability, and function of mitochondrial membrane ATP synthase (mitochondrial complex V). The protein is Prickle planar cell polarity protein 3-A (prickle3-a) of Xenopus laevis (African clawed frog).